The sequence spans 223 residues: Deoxyribose-phosphate aldolase (223 aa).

Aspartate 91 functions as the Proton donor/acceptor in the catalytic mechanism. The active-site Schiff-base intermediate with acetaldehyde is lysine 153. Lysine 182 (proton donor/acceptor) is an active-site residue.

This sequence belongs to the DeoC/FbaB aldolase family. DeoC type 1 subfamily.

The protein resides in the cytoplasm. The enzyme catalyses 2-deoxy-D-ribose 5-phosphate = D-glyceraldehyde 3-phosphate + acetaldehyde. The protein operates within carbohydrate degradation; 2-deoxy-D-ribose 1-phosphate degradation; D-glyceraldehyde 3-phosphate and acetaldehyde from 2-deoxy-alpha-D-ribose 1-phosphate: step 2/2. In terms of biological role, catalyzes a reversible aldol reaction between acetaldehyde and D-glyceraldehyde 3-phosphate to generate 2-deoxy-D-ribose 5-phosphate. In Streptococcus pyogenes serotype M3 (strain ATCC BAA-595 / MGAS315), this protein is Deoxyribose-phosphate aldolase.